The primary structure comprises 708 residues: MPSATSHSGSGSKSSGPPPPSGSSGNEAGAGAAAPASQHPMTGTGAVQTEAMKQILGVIDKKLRNLEKKKGKLDDYQERMNKGERLNQDQLDAVSKYQEVTNNLEFAKELQRSFMALSQDIQKTIKKTARREQLMREEAEQKRLKTVLELQYVLDKLGDDEVRTDLKQGLNGVPILSEEELSLLDEFYKLADPERDMSLRLNEQYEHASIHLWDLLEGKEKPVCGTTYKALKEIVERVFQSNYFDSTHNHQNGLCEEEEAASAPTVEDQAAEAEPEPVEEYTEQNEVESTEYVNRQFMAETQFSSGEKEQVDDWTVETVEVVNSLQQQPQAASPSVPEPHSLTPVAQADPLVRRQRVQDLMAQMQGPYNFIQDSMLDFENQTLDPAIVSAQPMNPAQNMDIPQLVCPPVHSESRLAQPNQVSVQPEATQVPLVSSTSEGYTASQPLYQPSHATDQRPQKEPIDQIQATISLNTDQTTASSSLPAASQPQVFQAGTSKPLHSSGINVNAAPFQSMQTVFNMNAPVPPVNEPETLKQQNQYQASYNQSFSSQPHQVEQTELQQEQLQTVVGTYHGSQDQPHQVTGNHQQPPQQNTGFPRSNQPYYNSRGVSRGGSRGARGLMNGYRGPANGFRGGYDGYRPSFSTNTPNSGYTQSQFSAPRDYSGYQRDGYQQNFKRGSGQSGPRGAPRGRGGPPRPNRGMPQMNTQQVN.

Low complexity-rich tracts occupy residues 1 to 15 and 22 to 37; these read MPSATSHSGSGSKSS and GSSGNEAGAGAAAPAS. A disordered region spans residues 1–48; sequence MPSATSHSGSGSKSSGPPPPSGSSGNEAGAGAAAPASQHPMTGTGAVQ. Pro-2 bears the N-acetylproline mark. Ser-10 carries the phosphoserine modification. A coiled-coil region spans residues 58-92; the sequence is VIDKKLRNLEKKKGKLDDYQERMNKGERLNQDQLD. Residue Ser-113 is modified to Phosphoserine. A coiled-coil region spans residues 123–151; that stretch reads KTIKKTARREQLMREEAEQKRLKTVLELQ. The residue at position 163 (Arg-163) is an Omega-N-methylarginine. A disordered region spans residues 258-287; sequence EEAASAPTVEDQAAEAEPEPVEEYTEQNEV. Residues 269–287 show a composition bias toward acidic residues; it reads QAAEAEPEPVEEYTEQNEV. Phosphoserine occurs at positions 333 and 341. The tract at residues 358-379 is G3BP1-binding; that stretch reads QDLMAQMQGPYNFIQDSMLDFE. Over residues 415-452 the composition is skewed to polar residues; sequence LAQPNQVSVQPEATQVPLVSSTSEGYTASQPLYQPSHA. 4 disordered regions span residues 415 to 459, 473 to 497, 521 to 559, and 571 to 708; these read LAQP…RPQK, TDQTTASSSLPAASQPQVFQAGTSK, NAPVPPVNEPETLKQQNQYQASYNQSFSSQPHQVEQTEL, and YHGS…QQVN. 2 stretches are compositionally biased toward low complexity: residues 475 to 489 and 535 to 559; these read QTTASSSLPAASQPQ and QQNQYQASYNQSFSSQPHQVEQTEL. Residues 572–603 show a composition bias toward polar residues; it reads HGSQDQPHQVTGNHQQPPQQNTGFPRSNQPYY. A Phosphotyrosine modification is found at Tyr-623. 2 positions are modified to omega-N-methylarginine: Arg-624 and Arg-631. Tyr-634 and Tyr-637 each carry phosphotyrosine. Position 638 is an omega-N-methylarginine (Arg-638). Polar residues predominate over residues 640–656; the sequence is SFSTNTPNSGYTQSQFS. 2 O-linked (GlcNAc) serine glycosylation sites follow: Ser-642 and Ser-648. A phosphotyrosine mark is found at Tyr-650, Tyr-661, Tyr-664, and Tyr-669. Low complexity-rich tracts occupy residues 675–685 and 696–708; these read RGSGQSGPRGA and NRGMPQMNTQQVN. Arg-697 carries the post-translational modification Asymmetric dimethylarginine; alternate. Arg-697 carries the post-translational modification Omega-N-methylarginine; alternate.

It belongs to the caprin family. May form homomultimers. Interacts with G3BP1; interaction is direct and promotes stress granule formation. Interacts with G3BP2; interaction is direct and promotes stress granule formation. Interacts with PQBP1. Interacts with DDX3X. Interacts (when phosphorylated by EPHA4) with FMR1; interaction with FMR1 promotes formation of a membraneless compartment. Tyrosine phosphorylation by EPHA4 promotes interaction with FMR1 and liquid-liquid phase separation (LLPS) for the formation of a membraneless compartment that concentrates mRNAs with associated regulatory factors. In terms of processing, O-glycosylated (O-GlcNAcylated), in a cell cycle-dependent manner. O-glycosylation by OGT inhibit ability to undergo liquid-liquid phase separation (LLPS).

The protein resides in the cytoplasm. It is found in the cytoplasmic ribonucleoprotein granule. Its subcellular location is the cytosol. It localises to the cell projection. The protein localises to the dendrite. The protein resides in the lamellipodium. With respect to regulation, ability to mediate liquid-liquid phase separation is regulated by ATP: moderate concentrations of ATP enhance phase separation, whereas high concentrations of ATP lead to inhibition of phase separation. Its function is as follows. mRNA-binding protein that acts as a regulator of mRNAs transport, translation and/or stability, and which is involved in neurogenesis, synaptic plasticity in neurons and cell proliferation and migration in multiple cell types. Plays an essential role in cytoplasmic stress granule formation. Acts as an mRNA regulator by mediating formation of some phase-separated membraneless compartment: undergoes liquid-liquid phase separation upon binding to target mRNAs, leading to assemble mRNAs into cytoplasmic ribonucleoprotein granules that concentrate mRNAs with associated regulatory factors. Undergoes liquid-liquid phase separation following phosphorylation and interaction with FMR1, promoting formation of cytoplasmic ribonucleoprotein granules that concentrate mRNAs with factors that inhibit translation and mediate deadenylation of target mRNAs. In these cytoplasmic ribonucleoprotein granules, CAPRIN1 mediates recruitment of CNOT7 deadenylase, leading to mRNA deadenylation and degradation. Binds directly and selectively to MYC and CCND2 mRNAs. In neuronal cells, directly binds to several mRNAs associated with RNA granules, including BDNF, CAMK2A, CREB1, MAP2, NTRK2 mRNAs, as well as to GRIN1 and KPNB1 mRNAs, but not to rRNAs. The polypeptide is Caprin-1 (CAPRIN1) (Bos taurus (Bovine)).